Reading from the N-terminus, the 110-residue chain is Iron-sulfur cluster assembly protein CyaY (110 aa).

Belongs to the frataxin family.

Its function is as follows. Involved in iron-sulfur (Fe-S) cluster assembly. May act as a regulator of Fe-S biogenesis. The sequence is that of Iron-sulfur cluster assembly protein CyaY from Pseudomonas putida (strain W619).